Consider the following 271-residue polypeptide: 2-aminophenol 1,6-dioxygenase subunit alpha (271 aa).

Belongs to the LigB/MhpB extradiol dioxygenase family. As to quaternary structure, the APD complex is a heterotetramer of 2 alpha (CnbCa) and 2 beta (CnbCb) subunits.

It participates in xenobiotic degradation; nitrobenzene degradation. Its pathway is xenobiotic degradation; 4-chloronitrobenzene degradation. Its function is as follows. Component of the 2-aminophenol 1,6-dioxygenase (APD) complex that catalyzes the ring fission of 2-aminophenol to produce 2-aminomuconic semialdehyde. CnbCa may have a role in the stability of the complex. The complex is also active on other substrates such as 2-amino-5-chlorophenol (68% activity), protocatechuate (33% activity) and catechol (5% activity). Both 2-aminophenol and 2-amino-5-cholorophenol are likely native substrates for this dioxygenase which is involved in the reductive degradation pathway of both nitrobenzene (NB) and 4-chloronitrobenzene (4-CNB), allowing C.testosteroni strain CNB-1 to grow on these compounds as sole source of carbon, nitrogen, and energy. This is 2-aminophenol 1,6-dioxygenase subunit alpha from Comamonas testosteroni (Pseudomonas testosteroni).